The primary structure comprises 148 residues: HTH-type transcriptional regulator BilQ (148 aa).

Positions 1–140 (MDFKNLQYES…LVKNLHVVKD (140 aa)) constitute an HTH marR-type domain. The H-T-H motif DNA-binding region spans 54 to 77 (LNDVSTEFEVDKAHTTRTISRLEQ).

Transcription regulator that regulates expression of the bilirubin reductase operon (bilQ, bilR and bilS). This is HTH-type transcriptional regulator BilQ from Clostridioides difficile (strain CD3).